A 261-amino-acid polypeptide reads, in one-letter code: Thiamine thiazole synthase (261 aa).

Residues Ser-40, 59–60, Gly-67, Val-133, and 159–161 each bind NAD(+); these read ER and HID. 2 residues coordinate Fe cation: Asp-161 and His-176. Ser-179 and Met-226 together coordinate NAD(+). Arg-236 provides a ligand contact to glycine.

The protein belongs to the THI4 family. Homooctamer; tetramer of dimers. Fe(2+) is required as a cofactor.

The enzyme catalyses hydrogen sulfide + glycine + NAD(+) = ADP-5-ethyl-4-methylthiazole-2-carboxylate + nicotinamide + 3 H2O + H(+). It participates in cofactor biosynthesis; thiamine diphosphate biosynthesis. Its function is as follows. Involved in the biosynthesis of the thiazole moiety of thiamine. Catalyzes the conversion of NAD and glycine to adenosine diphosphate 5-(2-hydroxyethyl)-4-methylthiazole-2-carboxylate (ADT), an adenylated thiazole intermediate, using free sulfide as a source of sulfur. This chain is Thiamine thiazole synthase, found in Methanococcus maripaludis (strain C5 / ATCC BAA-1333).